The sequence spans 60 residues: Cytochrome c oxidase subunit 9, mitochondrial (60 aa).

Residues 1-18 (MSAIAPITGSLKKRIMKD) are Mitochondrial matrix-facing. A helical membrane pass occupies residues 19 to 37 (IAVGMGLGTVLGSYWWWGF). The Mitochondrial intermembrane portion of the chain corresponds to 38–57 (HKPKIAARENYYTQLAEQKA). Positions 58 to 60 (AEE) are cleaved as a propeptide — removed in mature form.

The protein belongs to the fungal cytochrome c oxidase subunit 7a family. In terms of assembly, component of the cytochrome c oxidase (complex IV, CIV), a multisubunit enzyme composed of a catalytic core of 3 subunits and several supernumerary subunits. The complex exists as a monomer or a dimer and forms supercomplexes (SCs) in the inner mitochondrial membrane with ubiquinol-cytochrome c oxidoreductase (cytochrome b-c1 complex, complex III, CIII).

It is found in the mitochondrion inner membrane. It participates in energy metabolism; oxidative phosphorylation. Its function is as follows. Component of the cytochrome c oxidase, the last enzyme in the mitochondrial electron transport chain which drives oxidative phosphorylation. The respiratory chain contains 3 multisubunit complexes succinate dehydrogenase (complex II, CII), ubiquinol-cytochrome c oxidoreductase (cytochrome b-c1 complex, complex III, CIII) and cytochrome c oxidase (complex IV, CIV), that cooperate to transfer electrons derived from NADH and succinate to molecular oxygen, creating an electrochemical gradient over the inner membrane that drives transmembrane transport and the ATP synthase. Cytochrome c oxidase is the component of the respiratory chain that catalyzes the reduction of oxygen to water. Electrons originating from reduced cytochrome c in the intermembrane space (IMS) are transferred via the dinuclear copper A center (CU(A)) of subunit 2 and heme A of subunit 1 to the active site in subunit 1, a binuclear center (BNC) formed by heme A3 and copper B (CU(B)). The BNC reduces molecular oxygen to 2 water molecules using 4 electrons from cytochrome c in the IMS and 4 protons from the mitochondrial matrix. The polypeptide is Cytochrome c oxidase subunit 9, mitochondrial (COX9) (Eremothecium gossypii (strain ATCC 10895 / CBS 109.51 / FGSC 9923 / NRRL Y-1056) (Yeast)).